We begin with the raw amino-acid sequence, 467 residues long: Glutamate--tRNA ligase (467 aa).

A 'HIGH' region motif is present at residues 10 to 20 (PSPTGYLHVGG). The 'KMSKS' region signature appears at 238-242 (RLSKR). Lysine 241 lines the ATP pocket.

Belongs to the class-I aminoacyl-tRNA synthetase family. Glutamate--tRNA ligase type 1 subfamily. In terms of assembly, monomer.

The protein resides in the cytoplasm. The enzyme catalyses tRNA(Glu) + L-glutamate + ATP = L-glutamyl-tRNA(Glu) + AMP + diphosphate. Catalyzes the attachment of glutamate to tRNA(Glu) in a two-step reaction: glutamate is first activated by ATP to form Glu-AMP and then transferred to the acceptor end of tRNA(Glu). This chain is Glutamate--tRNA ligase, found in Citrifermentans bemidjiense (strain ATCC BAA-1014 / DSM 16622 / JCM 12645 / Bem) (Geobacter bemidjiensis).